A 418-amino-acid polypeptide reads, in one-letter code: Adenylosuccinate synthetase (418 aa).

GTP contacts are provided by residues 12-18 and 40-42; these read GDEGKGK and GHT. The active-site Proton acceptor is the D13. Mg(2+)-binding residues include D13 and G40. IMP is bound by residues 13–16, 38–41, T128, R142, Q221, T236, and R299; these read DEGK and NAGH. Catalysis depends on H41, which acts as the Proton donor. 295 to 301 is a binding site for substrate; the sequence is ATTGRNR. GTP-binding positions include R301, 327-329, and 399-401; these read KAD and SYG.

This sequence belongs to the adenylosuccinate synthetase family. In terms of assembly, homodimer. Mg(2+) serves as cofactor.

The protein localises to the cytoplasm. The catalysed reaction is IMP + L-aspartate + GTP = N(6)-(1,2-dicarboxyethyl)-AMP + GDP + phosphate + 2 H(+). It participates in purine metabolism; AMP biosynthesis via de novo pathway; AMP from IMP: step 1/2. In terms of biological role, plays an important role in the de novo pathway of purine nucleotide biosynthesis. Catalyzes the first committed step in the biosynthesis of AMP from IMP. The sequence is that of Adenylosuccinate synthetase from Finegoldia magna (strain ATCC 29328 / DSM 20472 / WAL 2508) (Peptostreptococcus magnus).